A 327-amino-acid polypeptide reads, in one-letter code: Undecaprenyl-phosphate 4-deoxy-4-formamido-L-arabinose transferase (327 aa).

The next 2 helical transmembrane spans lie at 233–253 (ILSL…LLLI) and 268–288 (VFTL…GMGL).

This sequence belongs to the glycosyltransferase 2 family.

Its subcellular location is the cell inner membrane. It catalyses the reaction UDP-4-deoxy-4-formamido-beta-L-arabinose + di-trans,octa-cis-undecaprenyl phosphate = 4-deoxy-4-formamido-alpha-L-arabinopyranosyl di-trans,octa-cis-undecaprenyl phosphate + UDP. Its pathway is glycolipid biosynthesis; 4-amino-4-deoxy-alpha-L-arabinose undecaprenyl phosphate biosynthesis; 4-amino-4-deoxy-alpha-L-arabinose undecaprenyl phosphate from UDP-4-deoxy-4-formamido-beta-L-arabinose and undecaprenyl phosphate: step 1/2. It participates in bacterial outer membrane biogenesis; lipopolysaccharide biosynthesis. Catalyzes the transfer of 4-deoxy-4-formamido-L-arabinose from UDP to undecaprenyl phosphate. The modified arabinose is attached to lipid A and is required for resistance to polymyxin and cationic antimicrobial peptides. The sequence is that of Undecaprenyl-phosphate 4-deoxy-4-formamido-L-arabinose transferase from Pectobacterium carotovorum subsp. carotovorum (strain PC1).